A 210-amino-acid chain; its full sequence is MSSSPTSSSSGSPSSHGHRSETEKQRRDDTNDLLNEFKKIVQKSESEKLSKEEVLFRIVKLLSGIQLHHESFSTSPGPIRSIKKIKSDREQVRRNKRVAAYRELRKFIALNNLSSSEEIDKMENLKVLEIIFEVIRGKSITCTVPCLPFPILPFLPVFPVYSPLVFNSYNQFSLYPPHMPTVQIPIVPSSSFEIDALEIEENEKDIDIVG.

The span at 1 to 15 (MSSSPTSSSSGSPSS) shows a compositional bias: low complexity. Residues 1–33 (MSSSPTSSSSGSPSSHGHRSETEKQRRDDTNDL) are disordered. The 52-residue stretch at 14-65 (SSHGHRSETEKQRRDDTNDLLNEFKKIVQKSESEKLSKEEVLFRIVKLLSGI) folds into the bHLH domain. Basic and acidic residues predominate over residues 18-33 (HRSETEKQRRDDTNDL).

As to quaternary structure, homodimer; binds to DNA as a homodimer. As to expression, expressed in intestinal cells (at protein level).

Its subcellular location is the nucleus. Functionally, as a homodimer binds DNA via the E-box sequence 5'-CACGTG-3'. Represses lag-2 transcription during embryogenesis via Notch signaling, in an unc-37-dependent manner. Also represses tbx-37 independent of Notch signaling. In the intestine, plays a role in probiotic-mediated protection against infections by pathogens such as S.enterica. This is most likely by positively regulating the expression of genes such as bar-1 upon exposure to probiotic bacteria such as the E.faecium. The polypeptide is Helix-loop-helix protein 26 (Caenorhabditis elegans).